The primary structure comprises 152 residues: Isoquinoline 1-oxidoreductase subunit alpha (152 aa).

The 77-residue stretch at 1 to 77 folds into the 2Fe-2S ferredoxin-type domain; sequence MIEFILNGQP…RQSVTTIEGL (77 aa). The [2Fe-2S] cluster site is built by Cys39, Cys44, and Cys47.

As to quaternary structure, heterodimer of an alpha chain and a beta chain.

The enzyme catalyses isoquinoline + A + H2O = isoquinolin-1(2H)-one + AH2. In terms of biological role, specific towards N-containing N-heterocyclic substrates, including isoquinoline, isoquinolin-5-ol, phthalazine and quinazoline. This is Isoquinoline 1-oxidoreductase subunit alpha (iorA) from Brevundimonas diminuta (Pseudomonas diminuta).